Consider the following 295-residue polypeptide: Acetylglutamate kinase (295 aa).

Residues 64-65, Arg-86, and Asn-190 each bind substrate; that span reads GG.

This sequence belongs to the acetylglutamate kinase family. ArgB subfamily.

Its subcellular location is the cytoplasm. The catalysed reaction is N-acetyl-L-glutamate + ATP = N-acetyl-L-glutamyl 5-phosphate + ADP. The protein operates within amino-acid biosynthesis; L-arginine biosynthesis; N(2)-acetyl-L-ornithine from L-glutamate: step 2/4. In terms of biological role, catalyzes the ATP-dependent phosphorylation of N-acetyl-L-glutamate. The polypeptide is Acetylglutamate kinase (Pelotomaculum thermopropionicum (strain DSM 13744 / JCM 10971 / SI)).